Here is a 142-residue protein sequence, read N- to C-terminus: MRNYDLSPLLRQWIGFDKLANALQNTGESQSFPPYNIEKSDDNHYRITLALAGFRQEDLDIQLEGTRLTVKGTPAQPEKEIKWLHQGLVTQPFSLSFTLAENMEVSGATFTNGLLHIDLTRNEPETIAPQRIAISERPALNS.

The region spanning 26 to 137 (TGESQSFPPY…APQRIAISER (112 aa)) is the sHSP domain.

It belongs to the small heat shock protein (HSP20) family. In terms of assembly, homodimer. Forms homomultimers of about 100-150 subunits at optimal growth temperatures. Conformation changes to oligomers at high temperatures or high ionic concentrations. The decrease in size of the multimers is accompanied by an increase in chaperone activity.

The protein localises to the cytoplasm. Functionally, associates with aggregated proteins, together with IbpA, to stabilize and protect them from irreversible denaturation and extensive proteolysis during heat shock and oxidative stress. Aggregated proteins bound to the IbpAB complex are more efficiently refolded and reactivated by the ATP-dependent chaperone systems ClpB and DnaK/DnaJ/GrpE. Its activity is ATP-independent. The polypeptide is Small heat shock protein IbpB (Citrobacter koseri (strain ATCC BAA-895 / CDC 4225-83 / SGSC4696)).